The sequence spans 220 residues: A-type ATP synthase subunit K (220 aa).

6 consecutive transmembrane segments (helical) span residues 5–25 (LILGAVGAGLAVGIAGLGSGI), 63–83 (FLVAILILFVFKTVSPWAMFA), 90–110 (LAGLSAIGQGIAASAGLGAVA), 125–145 (LPETQAIYGLLIAILLLVGVF), 155–175 (AALGAGFAVGFAGLSGIGQGI), and 195–215 (LVLAVMPETFAIFGLLIAILI).

It belongs to the V-ATPase proteolipid subunit family. As to quaternary structure, the A-type ATPase is composed of subunits A(3), B(3), C, D, E(1 or 2), F, H(2), I and K(x). Subunit K dimerizes and may form higher oligomers.

The protein localises to the cell membrane. Component of the A-type ATP synthase that produces ATP from ADP in the presence of a proton gradient across the membrane. In Methanocaldococcus jannaschii (strain ATCC 43067 / DSM 2661 / JAL-1 / JCM 10045 / NBRC 100440) (Methanococcus jannaschii), this protein is A-type ATP synthase subunit K.